A 416-amino-acid chain; its full sequence is Queuine tRNA-ribosyltransferase accessory subunit 2 (416 aa).

Cys-323, Cys-325, Cys-328, and His-354 together coordinate Zn(2+).

This sequence belongs to the queuine tRNA-ribosyltransferase family. QTRT2 subfamily. Heterodimer of a catalytic subunit and an accessory subunit. Zn(2+) is required as a cofactor.

The protein localises to the cytoplasm. Non-catalytic subunit of the queuine tRNA-ribosyltransferase (TGT) that catalyzes the base-exchange of a guanine (G) residue with queuine (Q) at position 34 (anticodon wobble position) in tRNAs with GU(N) anticodons (tRNA-Asp, -Asn, -His and -Tyr), resulting in the hypermodified nucleoside queuosine (7-(((4,5-cis-dihydroxy-2-cyclopenten-1-yl)amino)methyl)-7-deazaguanosine). The sequence is that of Queuine tRNA-ribosyltransferase accessory subunit 2 from Drosophila mojavensis (Fruit fly).